Reading from the N-terminus, the 312-residue chain is E3 ubiquitin-protein ligase RNF126-B (312 aa).

Residues Cys13, Cys16, Cys29, and Cys32 each contribute to the Zn(2+) site. The C4-type zinc finger occupies 13–32 (CHSCTAEITPRLPEYTCPRC). Disordered stretches follow at residues 41–63 (PETS…NRPS) and 96–139 (GTSG…RNEG). Residues 44 to 55 (SRNSESNSSNNS) are compositionally biased toward low complexity. Over residues 102 to 115 (EETRDGESRREHQS) the composition is skewed to basic and acidic residues. Residues 124–134 (PRARMSTRRGA) show a composition bias toward basic residues. The RING-type zinc finger occupies 228–269 (CPVCKEDYTVGESVRQLPCNHLFHNDCIIPWLEQHDTCPVCR). The tract at residues 275-312 (QNTATNPPGLTDMTFSSSSTSSSSSTSPTDENNTANNS) is disordered. Low complexity predominate over residues 290-301 (SSSSTSSSSSTS). The span at 302-312 (PTDENNTANNS) shows a compositional bias: polar residues.

It is found in the cytoplasm. Its subcellular location is the nucleus. It carries out the reaction S-ubiquitinyl-[E2 ubiquitin-conjugating enzyme]-L-cysteine + [acceptor protein]-L-lysine = [E2 ubiquitin-conjugating enzyme]-L-cysteine + N(6)-ubiquitinyl-[acceptor protein]-L-lysine.. The protein operates within protein modification; protein ubiquitination. Functionally, E3 ubiquitin-protein ligase that mediates ubiquitination oF target proteins. Depending on the associated E2 ligase, mediates 'Lys-27'-, 'Lys-29'-, 'Lys-48'- and/or 'Lys-63'-linked polyubiquitination of substrates. Part of a BAG6-dependent quality control process ensuring that proteins of the secretory pathway that are mislocalized to the cytosol are degraded by the proteasome. Probably acts by providing the ubiquitin ligase activity associated with the BAG6 complex and be responsible for ubiquitination of the hydrophobic mislocalized proteins and their targeting to the proteasome. The protein is E3 ubiquitin-protein ligase RNF126-B of Xenopus laevis (African clawed frog).